We begin with the raw amino-acid sequence, 64 residues long: Large ribosomal subunit protein uL29 (64 aa).

Belongs to the universal ribosomal protein uL29 family.

The protein is Large ribosomal subunit protein uL29 of Dichelobacter nodosus (strain VCS1703A).